A 434-amino-acid chain; its full sequence is Monodehydroascorbate reductase, seedling isozyme (434 aa).

FAD-binding positions include 13–16 (GGVA), glutamate 40, arginine 47, lysine 52, isoleucine 95, and 146–147 (RE). NAD(+) is bound by residues 171-177 (GGYIGLE), glutamate 195, arginine 201, and glycine 260. 173-177 (YIGLE) contacts NADP(+). The NADP(+) site is built by arginine 201 and glycine 260. Aspartate 297 contributes to the FAD binding site. 313-314 (EH) is an NAD(+) binding site. 313–314 (EH) lines the NADP(+) pocket. Valine 315 is an FAD binding site. Arginine 319 serves as a coordination point for L-ascorbate. Tyrosine 348 lines the FAD pocket. Residue tyrosine 348 participates in NAD(+) binding. Residue tyrosine 348 participates in NADP(+) binding. Arginine 350 is a binding site for L-ascorbate.

The protein belongs to the FAD-dependent oxidoreductase family. FAD is required as a cofactor.

The protein resides in the cytoplasm. It carries out the reaction 2 monodehydro-L-ascorbate radical + NADH + H(+) = 2 L-ascorbate + NAD(+). Catalyzes the conversion of monodehydroascorbate to ascorbate, oxidizing NADH in the process. The polypeptide is Monodehydroascorbate reductase, seedling isozyme (Cucumis sativus (Cucumber)).